A 352-amino-acid polypeptide reads, in one-letter code: CRISPR-associated endonuclease Cas1 1 (352 aa).

Glu-207, His-274, and Glu-289 together coordinate Mn(2+).

This sequence belongs to the CRISPR-associated endonuclease Cas1 family. In terms of assembly, homodimer, forms a heterotetramer with a Cas2 homodimer. Mg(2+) serves as cofactor. It depends on Mn(2+) as a cofactor.

Its function is as follows. CRISPR (clustered regularly interspaced short palindromic repeat), is an adaptive immune system that provides protection against mobile genetic elements (viruses, transposable elements and conjugative plasmids). CRISPR clusters contain spacers, sequences complementary to antecedent mobile elements, and target invading nucleic acids. CRISPR clusters are transcribed and processed into CRISPR RNA (crRNA). Acts as a dsDNA endonuclease. Involved in the integration of spacer DNA into the CRISPR cassette. This Saccharolobus solfataricus (strain ATCC 35092 / DSM 1617 / JCM 11322 / P2) (Sulfolobus solfataricus) protein is CRISPR-associated endonuclease Cas1 1.